The following is a 414-amino-acid chain: F-box protein At3g47030 (414 aa).

Positions 1–24 (MSGMLGLSAVMGKRPKQQVTARPR) are disordered. One can recognise an F-box domain in the interval 28 to 77 (IEKPEEIPDDLLIDVFSRLSIEDVARCRCLSRFWSSILRRRYFTELFHKM).

This chain is F-box protein At3g47030, found in Arabidopsis thaliana (Mouse-ear cress).